The primary structure comprises 454 residues: Phosphoglucosamine mutase (454 aa).

The Phosphoserine intermediate role is filled by Ser104. Residues Ser104, Asp247, Asp249, and Asp251 each contribute to the Mg(2+) site. Ser104 carries the post-translational modification Phosphoserine.

Belongs to the phosphohexose mutase family. The cofactor is Mg(2+). Activated by phosphorylation.

It catalyses the reaction alpha-D-glucosamine 1-phosphate = D-glucosamine 6-phosphate. In terms of biological role, catalyzes the conversion of glucosamine-6-phosphate to glucosamine-1-phosphate. The sequence is that of Phosphoglucosamine mutase from Bifidobacterium animalis subsp. lactis (strain AD011).